Reading from the N-terminus, the 198-residue chain is V-type ATP synthase subunit E 1 (198 aa).

Belongs to the V-ATPase E subunit family.

Functionally, produces ATP from ADP in the presence of a proton gradient across the membrane. This is V-type ATP synthase subunit E 1 from Clostridium tetani (strain Massachusetts / E88).